The chain runs to 33 residues: Nigrocin-1 (33 aa).

A disulfide bond links Cys27 and Cys33.

The protein belongs to the frog skin active peptide (FSAP) family. Brevinin subfamily. Expressed by the skin dorsal glands.

It localises to the secreted. Its function is as follows. Shows antibacterial activity against both Gram-positive and Gram-negative bacteria and against the fungus C.albicans. Has no hemolytic activity. This Pelophylax nigromaculatus (Black-spotted frog) protein is Nigrocin-1.